The chain runs to 256 residues: MRAIDLNSDLGESFGAWSMGDDAAMLDIVTSANVACGFHAGDPAGILRTLKAAAAKNVTIGAHVSYPDKVGFGRRNMDVASDELTADVIYQIGSLQGLAKAAGTSVRYVKPHGALYNTIAHDRRQAMAVIEAIRAIDPALVLVALAGSTLIELARSEGLQCIAEAFADRAYTPQGTLVSRREPGAVLHDPELVAQRMLRLVQSGSIEAIDGSLVRIEADSICVHGDSPAAVEMARELRRVLEQASTSLQPFAGKRS.

The protein belongs to the LamB/PxpA family. Forms a complex composed of PxpA, PxpB and PxpC.

It catalyses the reaction 5-oxo-L-proline + ATP + 2 H2O = L-glutamate + ADP + phosphate + H(+). Catalyzes the cleavage of 5-oxoproline to form L-glutamate coupled to the hydrolysis of ATP to ADP and inorganic phosphate. The chain is 5-oxoprolinase subunit A 3 from Pseudomonas syringae pv. tomato (strain ATCC BAA-871 / DC3000).